The following is a 160-amino-acid chain: Salivary gland broad-spectrum antiviral protein (160 aa).

Residues 17–37 (VALGLYFTVVVFVLFITSVNL) traverse the membrane as a helical segment. N62 and N145 each carry an N-linked (GlcNAc...) asparagine glycan.

Salivary gland (at protein level).

Its subcellular location is the membrane. (Microbial infection) Modulates replication of Zika virus in salivary glands. Functionally, (Microbial infection) Modulates replication of dengue virus type 2 in salivary glands. In terms of biological role, (Microbial infection) Modulates replication of chikungunya virus in salivary glands. This is Salivary gland broad-spectrum antiviral protein from Aedes aegypti (Yellowfever mosquito).